The primary structure comprises 205 residues: Anaerobic dimethyl sulfoxide reductase chain B (205 aa).

4Fe-4S ferredoxin-type domains follow at residues 4–32, 57–89, and 90–119; these read YGFY…LGTE, NIFA…KNAD, and GFVI…YDAQ. Residues cysteine 13, cysteine 16, cysteine 19, cysteine 23, cysteine 67, cysteine 70, cysteine 75, cysteine 79, cysteine 99, cysteine 102, cysteine 105, cysteine 109, cysteine 126, cysteine 129, cysteine 141, and cysteine 145 each contribute to the [4Fe-4S] cluster site.

As to quaternary structure, heterotrimeric enzyme composed of a catalytic heterodimer (DmsAB) and a membrane anchor protein (DmsC). Requires [4Fe-4S] cluster as cofactor.

Functionally, electron transfer subunit of the terminal reductase during anaerobic growth on various sulfoxide and N-oxide compounds. This Haemophilus influenzae (strain ATCC 51907 / DSM 11121 / KW20 / Rd) protein is Anaerobic dimethyl sulfoxide reductase chain B (dmsB).